Here is a 145-residue protein sequence, read N- to C-terminus: LIM domain only protein 3 (145 aa).

LIM zinc-binding domains follow at residues 11-73 (KGCA…LFGV) and 75-137 (GNCA…GLMK).

The polypeptide is LIM domain only protein 3 (Danio rerio (Zebrafish)).